The sequence spans 192 residues: Signal peptidase complex catalytic subunit sec11 (192 aa).

Topologically, residues 1–18 (MLSFLSSNLSSTRQSLAQ) are cytoplasmic. A helical; Signal-anchor for type II membrane protein membrane pass occupies residues 19–39 (VLNFALVLSTAFMLWKGLSVF). Residues 40–192 (TASSSPIVVV…GLMVILQREQ (153 aa)) are Lumenal-facing. Active-site charge relay system residues include Ser-53, His-92, and Asp-133. The segment at 177-188 (VLLGIMGLMVIL) is C-terminal short (CTS) helix.

It belongs to the peptidase S26B family. As to quaternary structure, component of the signal peptidase complex (SPC) composed of a catalytic subunit SEC11 and three accessory subunits SPC1, SPC2 and SPC3. The complex induces a local thinning of the ER membrane which is used to measure the length of the signal peptide (SP) h-region of protein substrates. This ensures the selectivity of the complex towards h-regions shorter than 18-20 amino acids. SPC associates with the translocon complex.

It localises to the endoplasmic reticulum membrane. It carries out the reaction Cleavage of hydrophobic, N-terminal signal or leader sequences from secreted and periplasmic proteins.. Catalytic component of the signal peptidase complex (SPC) which catalyzes the cleavage of N-terminal signal sequences from nascent proteins as they are translocated into the lumen of the endoplasmic reticulum. Specifically cleaves N-terminal signal peptides that contain a hydrophobic alpha-helix (h-region) shorter than 18-20 amino acids. This is Signal peptidase complex catalytic subunit sec11 (sec11) from Aspergillus clavatus (strain ATCC 1007 / CBS 513.65 / DSM 816 / NCTC 3887 / NRRL 1 / QM 1276 / 107).